We begin with the raw amino-acid sequence, 112 residues long: Abdominal ganglion neuropeptides L5-67 (112 aa).

The N-terminal stretch at 1-23 (MKTAVLLVCLAYVMAAILSLCAS) is a signal peptide. Position 33 is a phenylalanine amide (phenylalanine 33).

The prohormone is proteolytically cleaved in 2 steps, yielding first 2 products: luqin and PRMP. In the second step, PRMP is cleaved to yield luqin-B and luqin-C. In terms of tissue distribution, neurons L2-4 and L6, also called giant dorsal LUQ (Left Upper Quadrant) neurons of the abdominal ganglion. Also expressed in smaller neurons in the CNS and in peripheral organs such as the kidney.

The protein localises to the secreted. This Aplysia californica (California sea hare) protein is Abdominal ganglion neuropeptides L5-67.